Here is a 146-residue protein sequence, read N- to C-terminus: Catabolic 3-dehydroquinase (146 aa).

Y24 acts as the Proton acceptor in catalysis. Substrate-binding residues include N78, H84, and D91. Residue H104 is the Proton donor of the active site. Substrate is bound by residues 105–106 and R115; that span reads IT.

This sequence belongs to the type-II 3-dehydroquinase family. In terms of assembly, homododecamer. Adopts a ring-like structure, composed of an arrangement of two hexameric rings stacked on top of one another.

It carries out the reaction 3-dehydroquinate = 3-dehydroshikimate + H2O. It participates in aromatic compound metabolism; 3,4-dihydroxybenzoate biosynthesis; 3,4-dihydroxybenzoate from 3-dehydroquinate: step 1/2. Its function is as follows. Is involved in the catabolism of quinate. Allows the utilization of quinate as carbon source via the beta-ketoadipate pathway. The polypeptide is Catabolic 3-dehydroquinase (Candida tropicalis (strain ATCC MYA-3404 / T1) (Yeast)).